The primary structure comprises 241 residues: Sugar fermentation stimulation protein homolog (241 aa).

The protein belongs to the SfsA family.

The polypeptide is Sugar fermentation stimulation protein homolog (Yersinia enterocolitica serotype O:8 / biotype 1B (strain NCTC 13174 / 8081)).